Here is a 157-residue protein sequence, read N- to C-terminus: Transcriptional regulator AzlB (157 aa).

The 62-residue stretch at 5–66 (LDETDKAILR…IVDEKKLGIE (62 aa)) folds into the HTH asnC-type domain. Residues 24 to 43 (NLNLSKKIGLSPSACLARTK) constitute a DNA-binding region (H-T-H motif).

Functionally, transcriptional repressor of the azlBCD operon involved in branched-chain amino acid transport. The polypeptide is Transcriptional regulator AzlB (azlB) (Bacillus subtilis (strain 168)).